Consider the following 438-residue polypeptide: tRNA(Ile)-lysidine synthase (438 aa).

Residue 19–24 (SGGIDS) participates in ATP binding.

The protein belongs to the tRNA(Ile)-lysidine synthase family.

Its subcellular location is the cytoplasm. The catalysed reaction is cytidine(34) in tRNA(Ile2) + L-lysine + ATP = lysidine(34) in tRNA(Ile2) + AMP + diphosphate + H(+). Functionally, ligates lysine onto the cytidine present at position 34 of the AUA codon-specific tRNA(Ile) that contains the anticodon CAU, in an ATP-dependent manner. Cytidine is converted to lysidine, thus changing the amino acid specificity of the tRNA from methionine to isoleucine. The chain is tRNA(Ile)-lysidine synthase from Buchnera aphidicola subsp. Baizongia pistaciae (strain Bp).